The chain runs to 438 residues: Zinc finger protein 641 (438 aa).

Residues 1-53 (MQAEDRSQFGSAAEMLSEQTAALGTGWESMNVQLDGAEPQVERGSQEERPWRT) form a disordered region. Over residues 17–32 (SEQTAALGTGWESMNV) the composition is skewed to polar residues. Residues 40–51 (QVERGSQEERPW) show a composition bias toward basic and acidic residues. The region spanning 109–181 (VTIKDVSLCF…DPQDLEERDI (73 aa)) is the KRAB domain. The interval 171-265 (PDPQDLEERD…EMDSLLRPHT (95 aa)) is transactivation. Ser191 carries the post-translational modification Phosphoserine. 3 consecutive C2H2-type zinc fingers follow at residues 264–286 (HTCP…QQTH), 292–314 (YSCL…QKTH), and 320–342 (SRCS…QRVH). A disordered region spans residues 345–367 (GKSCKGQEVGESPGTRKRQRAPP). C2H2-type zinc fingers lie at residues 372 to 394 (HVCT…WLTH) and 400 to 422 (FQCP…LLTH). Residues 418–438 (HLLTHQGQSPRNSWDRGTSVF) form a disordered region. Polar residues predominate over residues 422 to 438 (HQGQSPRNSWDRGTSVF). The residue at position 426 (Ser426) is a Phosphoserine.

Belongs to the krueppel C2H2-type zinc-finger protein family. Highly expressed in skeletal muscle, moderate expression in heart, liver, and pancreas, lower expression in placenta, no expression seen in brain, lung, and kidney.

It is found in the nucleus. Functionally, transcriptional activator. Activates transcriptional activities of SRE and AP-1. The chain is Zinc finger protein 641 (ZNF641) from Homo sapiens (Human).